Consider the following 1068-residue polypeptide: Retinoblastoma-like protein 1 (1068 aa).

Threonine 332 bears the Phosphothreonine; by CDK2 mark. Threonine 369 is subject to Phosphothreonine; by CDK4. Residue threonine 385 is modified to Phosphothreonine; by CDK2. Residues 385 to 584 (TPVASATQSV…WEALQVSANK (200 aa)) form a domain A region. Positions 385–949 (TPVASATQSV…GRVKSFALKY (565 aa)) are pocket; binds T and E1A. The tract at residues 585-780 (VPTCEEVIFP…AQEVHSTGIN (196 aa)) is spacer. Serine 640 is modified (phosphoserine; by CDK2 and CDK4). A phosphoserine mark is found at serine 650 and serine 749. Serine 762 bears the Phosphoserine; by CDK2 mark. The interval 781–949 (RPKRTGSLAL…GRVKSFALKY (169 aa)) is domain B. Residues serine 964 and serine 975 each carry the phosphoserine; by CDK2 and CDK4 modification. Serine 988 carries the phosphoserine; by CDK2 modification. Position 997 is a phosphothreonine; by CDK2 (threonine 997). Phosphoserine; by CDK2 is present on serine 1009. Serine 1041 carries the phosphoserine modification.

It belongs to the retinoblastoma protein (RB) family. As to quaternary structure, component of the DREAM complex (also named LINC complex) at least composed of E2F4, E2F5, LIN9, LIN37, LIN52, LIN54, MYBL1, MYBL2, RBL1, RBL2, RBBP4, TFDP1 and TFDP2. The complex exists in quiescent cells where it represses cell cycle-dependent genes. It dissociates in S phase when LIN9, LIN37, LIN52 and LIN54 form a subcomplex that binds to MYBL2. Interacts with AATF. Interacts with KDM5A. Interacts with KMT5B and KMT5C. Interacts with USP4. Interacts with RBBP9. (Microbial infection) Interacts with SV40 and JC virus large T antigens. Large T antigen, but not E1A, binds only to the unphosphorylated form. In terms of assembly, (Microbial infection) Interacts with JC virus small t antigen. Post-translationally, cell-cycle arrest properties are inactivated by phosphorylation on Thr-332, Ser-640, Ser-964 and Ser-975 by CDK4.

It is found in the nucleus. In terms of biological role, key regulator of entry into cell division. Directly involved in heterochromatin formation by maintaining overall chromatin structure and, in particular, that of constitutive heterochromatin by stabilizing histone methylation. Recruits and targets histone methyltransferases KMT5B and KMT5C, leading to epigenetic transcriptional repression. Controls histone H4 'Lys-20' trimethylation. Probably acts as a transcription repressor by recruiting chromatin-modifying enzymes to promoters. Potent inhibitor of E2F-mediated trans-activation. May act as a tumor suppressor. This Homo sapiens (Human) protein is Retinoblastoma-like protein 1 (RBL1).